A 39-amino-acid chain; its full sequence is Cytochrome b6-f complex subunit 5 (39 aa).

The chain crosses the membrane as a helical span at residues 5 to 25; sequence LLSGIVLGLVPVTILGLFVTA.

This sequence belongs to the PetG family. In terms of assembly, the 4 large subunits of the cytochrome b6-f complex are cytochrome b6, subunit IV (17 kDa polypeptide, PetD), cytochrome f and the Rieske protein, while the 4 small subunits are PetG, PetL, PetM and PetN. The complex functions as a dimer.

It localises to the plastid. Its subcellular location is the chloroplast thylakoid membrane. Its function is as follows. Component of the cytochrome b6-f complex, which mediates electron transfer between photosystem II (PSII) and photosystem I (PSI), cyclic electron flow around PSI, and state transitions. PetG is required for either the stability or assembly of the cytochrome b6-f complex. This is Cytochrome b6-f complex subunit 5 from Pleurastrum terricola (Filamentous green alga).